A 339-amino-acid polypeptide reads, in one-letter code: Glycerol-3-phosphate dehydrogenase [NAD(P)+] (339 aa).

4 residues coordinate NADPH: Ser31, Trp32, Arg52, and Lys122. Residues Lys122 and Gly152 each contribute to the sn-glycerol 3-phosphate site. Ala156 contributes to the NADPH binding site. Residues Lys207, Asp260, Ser270, Arg271, and Asn272 each contribute to the sn-glycerol 3-phosphate site. Lys207 functions as the Proton acceptor in the catalytic mechanism. Arg271 contributes to the NADPH binding site. Position 293 (Glu293) interacts with NADPH.

This sequence belongs to the NAD-dependent glycerol-3-phosphate dehydrogenase family.

Its subcellular location is the cytoplasm. The catalysed reaction is sn-glycerol 3-phosphate + NAD(+) = dihydroxyacetone phosphate + NADH + H(+). It carries out the reaction sn-glycerol 3-phosphate + NADP(+) = dihydroxyacetone phosphate + NADPH + H(+). The protein operates within membrane lipid metabolism; glycerophospholipid metabolism. Functionally, catalyzes the reduction of the glycolytic intermediate dihydroxyacetone phosphate (DHAP) to sn-glycerol 3-phosphate (G3P), the key precursor for phospholipid synthesis. The chain is Glycerol-3-phosphate dehydrogenase [NAD(P)+] from Tropheryma whipplei (strain Twist) (Whipple's bacillus).